The following is a 457-amino-acid chain: Phosphomethylpyrimidine synthase (457 aa).

Residues Asn88, Met117, Tyr146, His182, 204–206 (SRG), 245–248 (DACR), and Glu284 each bind substrate. His288 contributes to the Zn(2+) binding site. Substrate is bound at residue Tyr311. His352 is a Zn(2+) binding site. Residues Cys428, Cys431, and Cys435 each contribute to the [4Fe-4S] cluster site.

The protein belongs to the ThiC family. The cofactor is [4Fe-4S] cluster.

The enzyme catalyses 5-amino-1-(5-phospho-beta-D-ribosyl)imidazole + S-adenosyl-L-methionine = 4-amino-2-methyl-5-(phosphooxymethyl)pyrimidine + CO + 5'-deoxyadenosine + formate + L-methionine + 3 H(+). The protein operates within cofactor biosynthesis; thiamine diphosphate biosynthesis. Its function is as follows. Catalyzes the synthesis of the hydroxymethylpyrimidine phosphate (HMP-P) moiety of thiamine from aminoimidazole ribotide (AIR) in a radical S-adenosyl-L-methionine (SAM)-dependent reaction. In Clostridium tetani (strain Massachusetts / E88), this protein is Phosphomethylpyrimidine synthase.